The chain runs to 664 residues: DNA ligase (664 aa).

Residues 32 to 36 (DKDYD) and 80 to 81 (SL) contribute to the NAD(+) site. Lysine 122 (N6-AMP-lysine intermediate) is an active-site residue. 3 residues coordinate NAD(+): arginine 144, glutamate 178, and lysine 314. The Zn(2+) site is built by cysteine 407, cysteine 410, cysteine 423, and cysteine 429. One can recognise a BRCT domain in the interval 587–664 (IKENIFNGKT…SEEDFKNMIG (78 aa)).

This sequence belongs to the NAD-dependent DNA ligase family. LigA subfamily. Mg(2+) is required as a cofactor. Requires Mn(2+) as cofactor.

It carries out the reaction NAD(+) + (deoxyribonucleotide)n-3'-hydroxyl + 5'-phospho-(deoxyribonucleotide)m = (deoxyribonucleotide)n+m + AMP + beta-nicotinamide D-nucleotide.. Its function is as follows. DNA ligase that catalyzes the formation of phosphodiester linkages between 5'-phosphoryl and 3'-hydroxyl groups in double-stranded DNA using NAD as a coenzyme and as the energy source for the reaction. It is essential for DNA replication and repair of damaged DNA. The sequence is that of DNA ligase from Clostridium novyi (strain NT).